The chain runs to 153 residues: ORM1-like protein 3 (153 aa).

The important for ceramide level-sensing stretch occupies residues 1 to 17; the sequence is MNVGTAHSEVNPNTRVM. Over 1–21 the chain is Cytoplasmic; it reads MNVGTAHSEVNPNTRVMNSRG. Helical transmembrane passes span 22 to 44 and 45 to 63; these read IWLS…PFVS and VPVV…MYIF. The Cytoplasmic portion of the chain corresponds to 64–100; that stretch reads LHTVKGTPFETPDQGKARLLTHWEQMDYGVQFTASRK. Residues 101 to 117 traverse the membrane as a helical segment; that stretch reads FLTITPIVLYFLTSFYT. Topologically, residues 118–121 are lumenal; the sequence is KYDQ. A helical transmembrane segment spans residues 122–139; sequence IHFVLNTVSLMSVLIPKL. Position 137 is a hydroxyproline (P137). The Cytoplasmic portion of the chain corresponds to 140-153; that stretch reads PQLHGVRIFGINKY.

This sequence belongs to the ORM family. As to quaternary structure, ceramide-sensitive subunit of the serine palmitoyltransferase (SPT) complex, which is also composed of SPTLC1, SPTLC2/3 and SPTSSA/B. In terms of processing, when hydroxylated at Pro-137, ubiquitinated via 'Lys-48'-linkage, leading to proteasomal degradation. In endothelial cells, ORMDL3 proteasomal degradation is controlled by the sphingosine 1-phosphate receptor signaling pathway. As to expression, widely expressed. Expressed in adult and fetal heart, brain, lung, liver, skeletal muscle and kidney. Expressed in adult pancreas and placenta and in fetal spleen and thymus.

It is found in the endoplasmic reticulum membrane. Its function is as follows. Plays an essential role in the homeostatic regulation of sphingolipid de novo biosynthesis by modulating the activity of the serine palmitoyltransferase (SPT) in response to ceramide levels. When complexed to SPT, the binding of ceramides to its N-terminus stabilizes a conformation that block SPT substrate entry, hence preventing SPT catalytic activity. Through this mechanism, maintains ceramide levels at sufficient concentrations for the production of complex sphingolipids, but which prevents the accumulation of ceramides to levels that trigger apoptosis. The protein is ORM1-like protein 3 (ORMDL3) of Homo sapiens (Human).